The primary structure comprises 332 residues: Ribose-phosphate pyrophosphokinase (332 aa).

57–59 (DGE) contributes to the ATP binding site. The Mg(2+) site is built by H150 and D189. K213 is a catalytic residue. Residues R215, D239, and 243 to 247 (DTAGT) each bind D-ribose 5-phosphate.

This sequence belongs to the ribose-phosphate pyrophosphokinase family. Class I subfamily. Homohexamer. The cofactor is Mg(2+).

It localises to the cytoplasm. It carries out the reaction D-ribose 5-phosphate + ATP = 5-phospho-alpha-D-ribose 1-diphosphate + AMP + H(+). The protein operates within metabolic intermediate biosynthesis; 5-phospho-alpha-D-ribose 1-diphosphate biosynthesis; 5-phospho-alpha-D-ribose 1-diphosphate from D-ribose 5-phosphate (route I): step 1/1. Its function is as follows. Involved in the biosynthesis of the central metabolite phospho-alpha-D-ribosyl-1-pyrophosphate (PRPP) via the transfer of pyrophosphoryl group from ATP to 1-hydroxyl of ribose-5-phosphate (Rib-5-P). This Gloeobacter violaceus (strain ATCC 29082 / PCC 7421) protein is Ribose-phosphate pyrophosphokinase.